A 54-amino-acid chain; its full sequence is H-bracotoxin-Cf4 (54 aa).

Residues 1–21 (MSKLFIFFLLVALLAFVSSEA) form the signal peptide. Cystine bridges form between cysteine 24-cysteine 39, cysteine 31-cysteine 43, and cysteine 38-cysteine 53.

Expressed by the venom duct.

The protein resides in the secreted. In terms of biological role, this endoparasitoid wasp peptide has a role in disruption of the cellular host immune response, since it reduces the capacity of D.saccharalis hemocytes to encapsulate foreign bodies. On the other hand, it shows no effect on the humoral immune response, since it has no effect on phenoloxidase activity. The sequence is that of H-bracotoxin-Cf4 from Cotesia flavipes (Parasitic wasp).